A 261-amino-acid polypeptide reads, in one-letter code: MKTLATIGDNCVDIYPQLNKAFSGGNAVNVAVYCTRYGIQPGCITWVGDDDYGTKLKQDLARMGVDISHVHTKHGVTAQTQVELHDNDRVFGDYTEGVMADFALSEEDYAWLAQYDIVHAAIWGHAEDAFPQLHAAGKLTAFDFSDKWDSPLWQTLVPHLDFAFASAPQEDETLRLKMKAIVARGAGTVIVTLGENGSIAWDGAQFWRQAPEPVTVIDTMGAGDSFIAGFLCGWSAGMTLPQAIAQGTACAAKTIQYHGAW.

The protein belongs to the carbohydrate kinase PfkB family. In terms of assembly, monomer.

The enzyme catalyses N(6)-(D-fructosyl)-L-lysine + ATP = N(6)-(6-phospho-D-fructosyl)-L-lysine + ADP + H(+). It functions in the pathway carbohydrate metabolism; fructoselysine degradation; D-glucose 6-phosphate and lysine from fructoselysine: step 1/2. Its function is as follows. Catalyzes the ATP-dependent phosphorylation of fructoselysine to fructoselysine 6-phosphate. Functions in a fructoselysine degradation pathway that allows E.coli to grow on fructoselysine or psicoselysine. To a much lesser extenst, is also able to phosphorylate psicoselysine. In Escherichia coli (strain K12), this protein is Fructoselysine 6-kinase.